Consider the following 109-residue polypeptide: Beta-keratin-related protein (109 aa).

S2 carries the N-acetylserine modification.

This sequence belongs to the avian keratin family.

In Coturnix japonica (Japanese quail), this protein is Beta-keratin-related protein (BKJ).